A 287-amino-acid polypeptide reads, in one-letter code: Eukaryotic translation initiation factor 3 subunit F (287 aa).

The MPN domain occupies 12–142 (VRVHPVVLFQ…IKAYVCVSLG (131 aa)).

Belongs to the eIF-3 subunit F family. In terms of assembly, component of the eukaryotic translation initiation factor 3 (eIF-3) complex.

It localises to the cytoplasm. Functionally, component of the eukaryotic translation initiation factor 3 (eIF-3) complex, which is involved in protein synthesis of a specialized repertoire of mRNAs and, together with other initiation factors, stimulates binding of mRNA and methionyl-tRNAi to the 40S ribosome. The eIF-3 complex specifically targets and initiates translation of a subset of mRNAs involved in cell proliferation. In Culex quinquefasciatus (Southern house mosquito), this protein is Eukaryotic translation initiation factor 3 subunit F.